Reading from the N-terminus, the 63-residue chain is Large ribosomal subunit protein bL28 (63 aa).

The protein belongs to the bacterial ribosomal protein bL28 family.

In Coprothermobacter proteolyticus (strain ATCC 35245 / DSM 5265 / OCM 4 / BT), this protein is Large ribosomal subunit protein bL28.